The following is a 229-amino-acid chain: 3,4-dihydroxy-2-butanone 4-phosphate synthase (229 aa).

D-ribulose 5-phosphate is bound by residues 28–29 (RE), Asp-33, 164–168 (RGGHT), and Glu-188. A Mg(2+)-binding site is contributed by Glu-29. Position 167 (His-167) interacts with Mg(2+).

Belongs to the DHBP synthase family. In terms of assembly, homodimer. Requires Mg(2+) as cofactor. Mn(2+) serves as cofactor.

It carries out the reaction D-ribulose 5-phosphate = (2S)-2-hydroxy-3-oxobutyl phosphate + formate + H(+). The protein operates within cofactor biosynthesis; riboflavin biosynthesis; 2-hydroxy-3-oxobutyl phosphate from D-ribulose 5-phosphate: step 1/1. Functionally, catalyzes the conversion of D-ribulose 5-phosphate to formate and 3,4-dihydroxy-2-butanone 4-phosphate. The sequence is that of 3,4-dihydroxy-2-butanone 4-phosphate synthase from Methanothermobacter thermautotrophicus (strain ATCC 29096 / DSM 1053 / JCM 10044 / NBRC 100330 / Delta H) (Methanobacterium thermoautotrophicum).